The chain runs to 323 residues: Annexin A3 (323 aa).

Ala2 is modified (N-acetylalanine). Annexin repeat units lie at residues 18–89 (FSPS…ALVT), 90–161 (APAL…TLAD), 173–245 (HLAK…AIVH), and 249–320 (NTPA…KICG). Lys177 carries the post-translational modification N6-acetyllysine. The residue at position 267 (Thr267) is a Phosphothreonine.

Belongs to the annexin family.

Inhibitor of phospholipase A2, also possesses anti-coagulant properties. This Mus musculus (Mouse) protein is Annexin A3 (Anxa3).